Here is a 357-residue protein sequence, read N- to C-terminus: Type II methyltransferase M1.HgaI (357 aa).

In terms of domain architecture, SAM-dependent MTase C5-type spans 5–357; it reads IMGLSLFSSA…NITREIFNEN (353 aa). Residue C83 is part of the active site.

This sequence belongs to the class I-like SAM-binding methyltransferase superfamily. C5-methyltransferase family.

It carries out the reaction a 2'-deoxycytidine in DNA + S-adenosyl-L-methionine = a 5-methyl-2'-deoxycytidine in DNA + S-adenosyl-L-homocysteine + H(+). Its function is as follows. A methylase that recognizes DNA with the sequence 5'-GCGTC-3', methylates C-2, and protects the DNA from cleavage by the HgaI endonuclease. This chain is Type II methyltransferase M1.HgaI (hgaIAM), found in Avibacterium volantium (Pasteurella volantium).